Consider the following 543-residue polypeptide: Protein SGE1 (543 aa).

Residues 1–8 lie on the Cytoplasmic side of the membrane; it reads MKSTLSLT. The helical transmembrane segment at 9–29 threads the bilayer; the sequence is LCVISLLLTLFLAALDIVIVV. The Extracellular portion of the chain corresponds to 30 to 41; that stretch reads TLYDTIGIKFHD. Residues 42 to 62 traverse the membrane as a helical segment; sequence FGNIGWLVTGYALSNAVFMLL. The Cytoplasmic segment spans residues 63-79; sequence WGRLAEILGTKECLMIS. The helical transmembrane segment at 80 to 100 threads the bilayer; that stretch reads VIVFEIGSLISALSNSMATLI. The Extracellular portion of the chain corresponds to 101–103; that stretch reads SGR. The helical transmembrane segment at 104–124 threads the bilayer; the sequence is VVAGFGGSGIESLAFVVGTSI. The Cytoplasmic portion of the chain corresponds to 125–131; that stretch reads VRENHRG. Residues 132 to 152 traverse the membrane as a helical segment; sequence IMITALAISYVIAEGVGPFIG. Residues 153–162 are Extracellular-facing; the sequence is GAFNEHLSWR. A helical membrane pass occupies residues 163-183; that stretch reads WCFYINLPIGAFAFIILAFCN. The Cytoplasmic portion of the chain corresponds to 184–227; it reads TSGEPHQKMWLPSKIKKIMNYDYGELLKASFWKNTFEVLVFKLD. The helical transmembrane segment at 228 to 248 threads the bilayer; sequence MVGIILSSAGFTLLMLGLSFG. Residues 249 to 255 lie on the Extracellular side of the membrane; the sequence is GNNFPWN. The chain crosses the membrane as a helical span at residues 256-276; the sequence is SGIIICFFTVGPILLLLFCAY. Residues 277 to 300 lie on the Cytoplasmic side of the membrane; that stretch reads DFHFLSLSGLHYDNKRIKPLLTWN. Residues 301–321 traverse the membrane as a helical segment; that stretch reads IASNCGIFTSSITGFLSCFAY. Topologically, residues 322–341 are extracellular; that stretch reads ELQSAYLVQLYQLVFKKKPT. A helical membrane pass occupies residues 342–362; it reads LASIHLWELSIPAMIATMAIA. Topologically, residues 363–373 are cytoplasmic; it reads YLNSKYGIIKP. The helical transmembrane segment at 374-394 threads the bilayer; sequence AIVFGVLCGIVGSGLFTLING. The Extracellular segment spans residues 395 to 399; that stretch reads ELSQS. A helical transmembrane segment spans residues 400–420; that stretch reads IGYSILPGIAFGSIFQATLLS. The Cytoplasmic segment spans residues 421–443; it reads SQVQITSDDPDFQNKFIEVTAFN. The chain crosses the membrane as a helical span at residues 444–464; that stretch reads SFAKSLGFAFGGNMGAMIFTA. Residues 465–508 lie on the Extracellular side of the membrane; the sequence is SLKNQMRSSQLNIPQFTSVETLLAYSTEHYDGPQSSLSKFINTA. Residues 509–529 traverse the membrane as a helical segment; sequence IHDVFYCALGCYALSFFFGIF. The Cytoplasmic portion of the chain corresponds to 530–543; sequence TSSKKTTISAKKQQ.

It belongs to the major facilitator superfamily.

It is found in the membrane. Its function is as follows. Drug export permease. Multi-copy suppressor of loss-of-function mutation of GAL11. Involved specifically in transcription of GAL4-dependent genes. Can link GAL4 with the basal transcription machinery if GAL11 is missing. Confers resistance to 10-N-nonyl acridine orange (NAO) and in general to cationic dyes. The protein is Protein SGE1 (SGE1) of Saccharomyces cerevisiae (strain ATCC 204508 / S288c) (Baker's yeast).